The primary structure comprises 600 residues: Terpenoid synthase 8 (600 aa).

Mg(2+)-binding residues include aspartate 352, aspartate 356, asparagine 497, and aspartate 505. Residues 352 to 356 carry the DDXXD motif motif; that stretch reads DDTCD.

This sequence belongs to the terpene synthase family. Tpsa subfamily. Requires Mg(2+) as cofactor. It depends on Mn(2+) as a cofactor. In terms of tissue distribution, stele, and tips of primary and secondary root.

It localises to the plastid. It catalyses the reaction (2E,6E,10E)-geranylgeranyl diphosphate = rhizathalene A + diphosphate. The protein operates within secondary metabolite biosynthesis; terpenoid biosynthesis. In terms of biological role, catalyzes the synthesis of the semivolatile diterpene rhizatalene A. This Arabidopsis thaliana (Mouse-ear cress) protein is Terpenoid synthase 8 (TPS08).